A 2138-amino-acid chain; its full sequence is MRLPQKTKTVLIFGDQTDSWLDGLDQVYKQAGSTPWLQSFLDDLTDAINAETKANMLDHALQESLGTFSTLQELGERYRHTTDELGMAHALLLHAVRAATLLQWVKREPNLLGRDGQAEWLGISGGLITLSARAISEDFDTLRNASLEVARLFVRLCKFTSVRSRAAEDAPGTWGWAVVGISPDELRKRLDEFQQSAGIPSIKRAQVGVTGAGWSTVIGPPSVLEIVMKQCPAVKSLAKNPLNIHALQHTIKLSPADLNFIVGNNSAFLDLPLCCPGMNLWGMDEPGATYANWGEMLKAICEQVLSRSLDIPHAVGKVNTKLDGVETIRVIQIGTTSHAPYLLGGLKGPGRHVSVQDAQSLLQASVSTSSSQSGRIAIVGMAGRGPGCDNVDEFWDLIMSKQDLCREVPKDRFDVDEYYCPNHGQGDKKCTMTTRFGCFMDKPGNFDSRFFHISPREAMLMDPGHRQFLMSTYEALEMAGYSDGHAKATDPTRIAAFYGQVSDDWHDQSHPTLGCDSYTLQGVQRAFGPGRIAWQFKWEGPTYSLDSACASTTSSIHLACMSLLSKDIDMAVAGAANILSFPHSFTCLSKAGVLSDTGNCKTYRDDADGYCRADFVGTVVLKRLEDAVAHNDNILAVVLSSGRNHSGNSTSITTSDAGAQERLFRKVLRNAHVHPDDVSYVEMHGTGTQVGDPAEVGAVGNLFKHRRPADGPIPVGSVKANFGHSEAAAGMASLLKCIKMFQTDTIPPQAGMPHALNPRFPPLSELNIKIPSEPKAFEKLSKPRRILLNNFDAAGGNACMLLEDYSDTAGTKGADPRSSHVVATSARTQAAHHANRRRLLEWLRANPTVSIEDVAYTTTARRMHHPHRFACTASSTQELIAKLEDSIDARDTKSSPPSPIVFVFGGQGSHYGGMGSELYRTSPRFRETVDLCANICEEHGFPSFLHLVTDDGIDMSTATTVQTQLAVLVLEIGLAAFWKSVGVQPSMVVGHSLGEYAALHVAGVLSLVDVLYLVGRRALLLLERCEEGAFTMLAVSMTATAALDFLQSHPQYSSCSVSCINSPTATVISGSTEQIAQLQADLTGHSKALPVPYGFHSFQMDSVLADYCTLAEGVTFSAPKIPVASTLLGSVVNKHGTFNGRYLSQQMRQAVDFVGALNVIKQKLADPIWLELGPKGVCTSFVRATFSPSSSTAEKTLSTLAGPGPGADNKAASWPPISKCLAALYMQGIAIDWLALHEPYTSCLKMVTLPSYAWDMKDYWITYTDANKNAEAAALSPAATPTAQQMISTCAQYVVQESPSSSKKIQVTFRASLAESGFGAIIGGHRMQREPICPGSAFCEAGFAAAAYVLEANSRKDDAHIAKLVLRHPTMTRPLTKNLVGPDGELLTTVIMEDASSNEIQVSWRASSAPSKGGLSYDLGSCVLEVRKDVQRLQADWDRTSYFVKARMDEVVRTAQDGHGHRFQPDIFYILFAPTVEYDSQYKCIKEAYVSSDFSEAVAEIELREDPSSTRFMASPYWGESIVHLAGFTVNANPENHLTASGTSFINSGFENFEQTVAFEAGKTYFTYVRVSRKDKGTRSCEVFVFDSDSRMIAQCSGLEFHEISNATLKQVLSGGKSKSVLKPDNAAPLKAPEKKEDATPTAPKKSADPGKEEEEEGDTATPAAVGEFEVIIQTIAIETGMDTSELTDDSALADLGVDSIMAIEVAARVSNATGRELTPSFVSEYPTIGDLRRAFAMAPSSSSSTSASESVSESLDDSSSTSRSATPSSSMKETEAGFVEDDSLRKKPVISAAAAVVTAAGVAETQATKVQPQAPAATAADNDSSPAPSVRIMLLQGRPAKSRGAADGSHAPPPFYMIADGTGSIATYIHLASSLQSKMPIYGIDSPFLRCPDRLTPEVGIPGAARLIVDALLKKQPDKDVPFWIGGFSGGAMVAYEVCRQLSAAGRPVDGLLLIDMCAPRQVAAVPEDDGEVGLAMFDAVSGQDESGVWSATDGTRRHLGAMFSCVATYNPEPLPPRGGGNTPAKRAAMIWARKGMIDRCVSSVRFRQMLADRGISPEPYPGFMEDPKLGAVAWSLPHKTGADLGPNGWERYLGGDRLLCMSIEADHLEMPTPGYAQLLGETMDKAFRYFRDGLMD.

Positions 11 to 249 (LIFGDQTDSW…NPLNIHALQH (239 aa)) are N-terminal acylcarrier protein transacylase (SAT) domain. The Ketosynthase family 3 (KS3) domain maps to 373–804 (SGRIAIVGMA…GGNACMLLED (432 aa)). Residues Cys-549, His-684, and His-724 each act as for beta-ketoacyl synthase activity in the active site. Residues 901 to 1184 (VFVFGGQGSH…KGVCTSFVRA (284 aa)) form a malonyl-CoA:ACP transacylase (MAT) domain region. Catalysis depends on Ser-992, which acts as the For acyl/malonyl transferase activity. The segment at 1291–1437 (AQYVVQESPS…KDVQRLQADW (147 aa)) is N-terminal hotdog fold. Residues 1291–1610 (AQYVVQESPS…FHEISNATLK (320 aa)) enclose the PKS/mFAS DH domain. Positions 1303 to 1607 (KKIQVTFRAS…GLEFHEISNA (305 aa)) are product template (PT) domain. The interval 1459–1610 (HGHRFQPDIF…FHEISNATLK (152 aa)) is C-terminal hotdog fold. The segment at 1618–1666 (SKSVLKPDNAAPLKAPEKKEDATPTAPKKSADPGKEEEEEGDTATPAAV) is disordered. The region spanning 1666–1740 (VGEFEVIIQT…DLRRAFAMAP (75 aa)) is the Carrier domain. At Ser-1700 the chain carries O-(pantetheine 4'-phosphoryl)serine. The segment covering 1740 to 1771 (PSSSSSTSASESVSESLDDSSSTSRSATPSSS) has biased composition (low complexity). Disordered regions lie at residues 1740–1781 (PSSS…GFVE) and 1807–1828 (QATK…SSPA). The interval 1860-2006 (ADGTGSIATY…TRRHLGAMFS (147 aa)) is thioesterase (TE) domain.

It functions in the pathway secondary metabolite biosynthesis. Its function is as follows. Non-reducing polyketide synthase; part of the gene cluster that mediates the biosynthesis of radicicol, a resorcylic acid lactone (RAL) that irreversibly inhibits the HSP90 molecular chaperone, an important target for cancer chemotherapy. The cluster encodes only two apparent post-PKS enzymes, a cytochrome P450 monooxygenase (radP) and a non-heme halogenase (radH) that introduce the epoxide and the chlorine, respectively. If this cluster includes all the genes required for radicicol biosynthesis, the remaining structural features of radicicol are presumably generated by the PKSs rads1 and rads2. The C-2' ketone could arise if the R-PKS rads1 and NR-PKS rads2 each carry out four iterations, in contrast to the five iteration-three iteration split for the hypothemycin PKSs. The origin of the cis 5',6' double bond is not known. The radicicol R-PKS rads1 ER domain may catalyze either double bond isomerization or reduction in the third iteration. This is Non-reducing polyketide synthase rads2 from Floropilus chiversii (Chaetomium chiversii).